The primary structure comprises 159 residues: Phosphopantetheine adenylyltransferase (159 aa).

Ser-8 contributes to the substrate binding site. Residues 8-9 and His-16 contribute to the ATP site; that span reads SF. The substrate site is built by Lys-40, Leu-73, and Lys-87. Residues 88-90, Glu-98, and 122-128 each bind ATP; these read GLR and YGYVSST.

The protein belongs to the bacterial CoaD family. As to quaternary structure, homohexamer. Mg(2+) serves as cofactor.

The protein resides in the cytoplasm. The enzyme catalyses (R)-4'-phosphopantetheine + ATP + H(+) = 3'-dephospho-CoA + diphosphate. The protein operates within cofactor biosynthesis; coenzyme A biosynthesis; CoA from (R)-pantothenate: step 4/5. Functionally, reversibly transfers an adenylyl group from ATP to 4'-phosphopantetheine, yielding dephospho-CoA (dPCoA) and pyrophosphate. In Corynebacterium efficiens (strain DSM 44549 / YS-314 / AJ 12310 / JCM 11189 / NBRC 100395), this protein is Phosphopantetheine adenylyltransferase.